The following is a 297-amino-acid chain: Formylmethanofuran--tetrahydromethanopterin formyltransferase-like protein (297 aa).

The protein belongs to the FTR family.

In Methanothermobacter thermautotrophicus (strain ATCC 29096 / DSM 1053 / JCM 10044 / NBRC 100330 / Delta H) (Methanobacterium thermoautotrophicum), this protein is Formylmethanofuran--tetrahydromethanopterin formyltransferase-like protein (ehaS).